Here is a 127-residue protein sequence, read N- to C-terminus: Class I hydrophobin 1 (127 aa).

A signal peptide spans 1–20 (MLSLLSKAVSLAILVTAVVA). 4 disulfide bridges follow: C53–C108, C60–C102, C61–C94, and C109–C122. N66 carries N-linked (GlcNAc...) asparagine glycosylation.

The protein belongs to the fungal hydrophobin family. In terms of assembly, self-assembles to form functional amyloid fibrils called rodlets. Self-assembly into fibrillar rodlets occurs spontaneously at hydrophobic:hydrophilic interfaces and the rodlets further associate laterally to form amphipathic monolayers. As to expression, expressed everywhere in the mycelial tissues of developing fruiting bodies except for the top parts of the pileus (cap) and for the prehymenophore; but high level of the transcript is detected in the parts surrounding the prehymenophore.

It localises to the secreted. The protein resides in the cell wall. Aerial growth, conidiation, and dispersal of filamentous fungi in the environment rely upon a capability of their secreting small amphipathic proteins called hydrophobins (HPBs) with low sequence identity. Class I can self-assemble into an outermost layer of rodlet bundles on aerial cell surfaces, conferring cellular hydrophobicity that supports fungal growth, development and dispersal; whereas Class II form highly ordered films at water-air interfaces through intermolecular interactions but contribute nothing to the rodlet structure. Hyd1 is a class I hydrophobin that plays a role in fruiting body initiation rather than in mature fruit body maintenance. Seems to be involved in the formation in the extracellular matrix of lined air channels with a hydrophobic membrane. These channels may help to provide gas exchange during respiration in mycelial tissues of developing fruiting bodies and are formed all over the mycelial tissues of these developing fruiting bodies except for the top parts of the pileus (cap) and for the prehymenophore. The chain is Class I hydrophobin 1 from Lentinula edodes (Shiitake mushroom).